The chain runs to 335 residues: UPF0353 protein BCG_1543 (335 aa).

2 consecutive transmembrane segments (helical) span residues 18–38 (WFFL…LMQL) and 67–87 (VPAI…AGPT). A VWFA domain is found at 98 to 294 (VVMLVIDVSQ…AELRAVYSSL (197 aa)). The helical transmembrane segment at 309-329 (VGWLRLGALALALAALAALLI) threads the bilayer.

It belongs to the UPF0353 family.

It is found in the cell membrane. The sequence is that of UPF0353 protein BCG_1543 from Mycobacterium bovis (strain BCG / Pasteur 1173P2).